We begin with the raw amino-acid sequence, 237 residues long: tRNA(His) guanylyltransferase (237 aa).

3 residues coordinate Mg(2+): Asp-29, Gly-30, and Asp-77. Residues 29–34 and 76–77 contribute to the GTP site; these read DGKKFH and SD.

The protein belongs to the tRNA(His) guanylyltransferase family. Mg(2+) serves as cofactor.

It carries out the reaction a 5'-end ribonucleotide-tRNA(His) + GTP + ATP + H2O = a 5'-end phospho-guanosine-ribonucleotide-tRNA(His) + AMP + 2 diphosphate + H(+). Adds a GMP to the 5'-end of tRNA(His) after transcription and RNase P cleavage. This Candida glabrata (strain ATCC 2001 / BCRC 20586 / JCM 3761 / NBRC 0622 / NRRL Y-65 / CBS 138) (Yeast) protein is tRNA(His) guanylyltransferase (THG1).